Reading from the N-terminus, the 464-residue chain is NADH-quinone oxidoreductase subunit N 2 (464 aa).

14 helical membrane passes run 12-32, 33-53, 62-82, 93-113, 117-137, 152-172, 189-209, 227-247, 254-274, 282-304, 310-330, 351-371, 400-420, and 434-454; these read VGIIFLIILELFLPSFDLIGF, LGFLISFISGVLAIKYSLAGY, INAFSLLLKGVMYILTSFVIF, TFVENVYTFLLISLGLSIMVS, LAVILAGLELASISMYISVGM, LVLGSMTTAFFGIGSAFYIGA, FALASLFLFVAFALKVSAAPF, FISTVPKIGFYAVLFLLASYI, FSYIVGIVGVISMFWGNLVAY, MLAYSSIGHAGYFLIGFSRYNPL, IFYVIVYAFATAGAFLVLSIL, PFLATALALFLFALIGIPPFA, IIAAGYYLKLIVYMFFKEPAT, and IGISAFLIIVFFFGIFPNILF.

It belongs to the complex I subunit 2 family. NDH-1 is composed of 14 different subunits. Subunits NuoA, H, J, K, L, M, N constitute the membrane sector of the complex.

The protein resides in the cell inner membrane. It carries out the reaction a quinone + NADH + 5 H(+)(in) = a quinol + NAD(+) + 4 H(+)(out). Functionally, NDH-1 shuttles electrons from NADH, via FMN and iron-sulfur (Fe-S) centers, to quinones in the respiratory chain. The immediate electron acceptor for the enzyme in this species is believed to be ubiquinone. Couples the redox reaction to proton translocation (for every two electrons transferred, four hydrogen ions are translocated across the cytoplasmic membrane), and thus conserves the redox energy in a proton gradient. This is NADH-quinone oxidoreductase subunit N 2 from Hydrogenobaculum sp. (strain Y04AAS1).